Here is a 95-residue protein sequence, read N- to C-terminus: Cobalt transport protein CbiN (95 aa).

2 helical membrane-spanning segments follow: residues 7–27 and 67–87; these read IMLI…SGLG and LLFA…FGYY.

This sequence belongs to the CbiN family. As to quaternary structure, forms an energy-coupling factor (ECF) transporter complex composed of an ATP-binding protein (A component, CbiO), a transmembrane protein (T component, CbiQ) and 2 possible substrate-capture proteins (S components, CbiM and CbiN) of unknown stoichimetry.

It localises to the cell membrane. The protein operates within cofactor biosynthesis; adenosylcobalamin biosynthesis. Part of the energy-coupling factor (ECF) transporter complex CbiMNOQ involved in cobalt import. The chain is Cobalt transport protein CbiN from Methanothermobacter marburgensis (strain ATCC BAA-927 / DSM 2133 / JCM 14651 / NBRC 100331 / OCM 82 / Marburg) (Methanobacterium thermoautotrophicum).